Here is a 155-residue protein sequence, read N- to C-terminus: MKQIELQRHMEEVSLQFFQKEFRHRAVFNARLRTTGGRYLLKSHDIEMNPKYLENFGLEYFFGIMKHELCHYHLHLEKKGYQHRDKDFRELLKKVNAPRFCATIPREITMHEYTCENCGKSFLKQRRFNVNRYRCGSCGGKLKQLGSKKIYTENR.

A SprT-like domain is found at 7-144; it reads QRHMEEVSLQ…CGSCGGKLKQ (138 aa). Zn(2+) is bound at residue His-67. Residue Glu-68 is part of the active site. Position 71 (His-71) interacts with Zn(2+).

Belongs to the SprT family. Zn(2+) is required as a cofactor.

The protein resides in the cytoplasm. This is Protein SprT-like from Listeria welshimeri serovar 6b (strain ATCC 35897 / DSM 20650 / CCUG 15529 / CIP 8149 / NCTC 11857 / SLCC 5334 / V8).